A 400-amino-acid polypeptide reads, in one-letter code: NADH-quinone oxidoreductase subunit D (400 aa).

The protein belongs to the complex I 49 kDa subunit family. In terms of assembly, NDH-1 is composed of 14 different subunits. Subunits NuoB, C, D, E, F, and G constitute the peripheral sector of the complex.

Its subcellular location is the cell inner membrane. It catalyses the reaction a quinone + NADH + 5 H(+)(in) = a quinol + NAD(+) + 4 H(+)(out). In terms of biological role, NDH-1 shuttles electrons from NADH, via FMN and iron-sulfur (Fe-S) centers, to quinones in the respiratory chain. The immediate electron acceptor for the enzyme in this species is believed to be ubiquinone. Couples the redox reaction to proton translocation (for every two electrons transferred, four hydrogen ions are translocated across the cytoplasmic membrane), and thus conserves the redox energy in a proton gradient. The polypeptide is NADH-quinone oxidoreductase subunit D (Granulibacter bethesdensis (strain ATCC BAA-1260 / CGDNIH1)).